We begin with the raw amino-acid sequence, 188 residues long: Putative manganese efflux pump MntP (188 aa).

The next 6 helical transmembrane spans lie at 3–23 (LSAT…ASIG), 41–61 (LIFG…GMLA), 62–82 (SQFI…FLGG), 107–129 (LLVT…LAFL), 143–163 (ATFI…PLLG), and 168–188 (ILGG…HFAG).

This sequence belongs to the MntP (TC 9.B.29) family.

Its subcellular location is the cell inner membrane. Its function is as follows. Probably functions as a manganese efflux pump. This chain is Putative manganese efflux pump MntP, found in Klebsiella pneumoniae subsp. pneumoniae (strain ATCC 700721 / MGH 78578).